Here is a 338-residue protein sequence, read N- to C-terminus: Glyceraldehyde-3-phosphate dehydrogenase (338 aa).

NAD(+) is bound by residues 12–13 (RI), aspartate 34, and arginine 80. D-glyceraldehyde 3-phosphate-binding positions include 151 to 153 (SCT), threonine 182, 211 to 212 (TG), and arginine 234. Cysteine 152 serves as the catalytic Nucleophile. Position 316 (asparagine 316) interacts with NAD(+).

It belongs to the glyceraldehyde-3-phosphate dehydrogenase family. In terms of assembly, homotetramer.

The protein localises to the cytoplasm. It carries out the reaction D-glyceraldehyde 3-phosphate + phosphate + NAD(+) = (2R)-3-phospho-glyceroyl phosphate + NADH + H(+). It participates in carbohydrate degradation; glycolysis; pyruvate from D-glyceraldehyde 3-phosphate: step 1/5. The polypeptide is Glyceraldehyde-3-phosphate dehydrogenase (GPD) (Paracoccidioides lutzii (strain ATCC MYA-826 / Pb01) (Paracoccidioides brasiliensis)).